A 498-amino-acid polypeptide reads, in one-letter code: WD repeat-containing protein 55 homolog (498 aa).

The segment at 1-131 is disordered; sequence MHTHNNFKTP…ATFDLDEDDE (131 aa). Acidic residues-rich tracts occupy residues 12 to 23 and 31 to 48; these read DEDELDDLDEDM and IEQE…EYDL. 2 stretches are compositionally biased toward low complexity: residues 67–82 and 93–103; these read NDSS…NAAD and AGGVTAGGATS. WD repeat units follow at residues 154 to 193, 198 to 237, 241 to 279, 282 to 321, 324 to 363, and 408 to 447; these read KLED…NKLL, VHSK…LKKL, AHDD…AIFE, ELED…MYVQ, PYEE…YHCD, and QHNM…DFGD. The disordered stretch occupies residues 478–498; sequence DLTKENADGDDDPGAGPSNMA.

Belongs to the WD repeat WDR55 family.

The protein is WD repeat-containing protein 55 homolog of Drosophila melanogaster (Fruit fly).